A 64-amino-acid chain; its full sequence is U9-ctenitoxin-Pr1a (64 aa).

5 disulfide bridges follow: cysteine 3–cysteine 15, cysteine 9–cysteine 24, cysteine 14–cysteine 47, cysteine 34–cysteine 55, and cysteine 49–cysteine 61.

Expressed by the venom gland.

Its subcellular location is the secreted. In terms of biological role, non-toxic to mice and insects. This is U9-ctenitoxin-Pr1a from Phoneutria reidyi (Brazilian Amazonian armed spider).